The sequence spans 473 residues: Photosystem II CP43 reaction center protein (473 aa).

Positions Met1–Glu14 are excised as a propeptide. The residue at position 15 (Thr15) is an N-acetylthreonine. Thr15 bears the Phosphothreonine mark. The next 5 helical transmembrane spans lie at Leu69–Ala93, Leu134–Asn155, Lys178–Thr200, Lys255–Ser275, and Trp291–Ala312. Residue Glu367 coordinates [CaMn4O5] cluster. The helical transmembrane segment at Arg447 to Pro471 threads the bilayer.

It belongs to the PsbB/PsbC family. PsbC subfamily. PSII is composed of 1 copy each of membrane proteins PsbA, PsbB, PsbC, PsbD, PsbE, PsbF, PsbH, PsbI, PsbJ, PsbK, PsbL, PsbM, PsbT, PsbX, PsbY, PsbZ, Psb30/Ycf12, at least 3 peripheral proteins of the oxygen-evolving complex and a large number of cofactors. It forms dimeric complexes. The cofactor is Binds multiple chlorophylls and provides some of the ligands for the Ca-4Mn-5O cluster of the oxygen-evolving complex. It may also provide a ligand for a Cl- that is required for oxygen evolution. PSII binds additional chlorophylls, carotenoids and specific lipids..

The protein localises to the plastid. It localises to the chloroplast thylakoid membrane. In terms of biological role, one of the components of the core complex of photosystem II (PSII). It binds chlorophyll and helps catalyze the primary light-induced photochemical processes of PSII. PSII is a light-driven water:plastoquinone oxidoreductase, using light energy to abstract electrons from H(2)O, generating O(2) and a proton gradient subsequently used for ATP formation. This Fagopyrum esculentum subsp. ancestrale (Wild buckwheat) protein is Photosystem II CP43 reaction center protein.